A 416-amino-acid polypeptide reads, in one-letter code: MASLGNSGSASSPMVMLAPKTKTKKRHFMQQKVKVFRASDPMLSVFMWGVNHSINDLNQVPVPVMLLPDDFKANTKIKVNNHLFNKENLPSHFEFKEYCPQVFRNLRERFGIEDLDYQASLARSAPMKGDGQGEGLLFTSYDRTLIVKQISSEEVADMHNILSEYHQHIVKCHGSTLLPQFLGMYRITVESEDTYLIVMRNMFSHRLLVHRKYDLKGSLVDREASDKEKVKELPTFKDMDFRNNMQKVYVTEEQKEKMMEKLNRDVEFLVKLKIMDYSLLLGIHDVARGEREEEEAEEPCYEDDADPENGLAPALQVGSYGTSPEGIAGYMNSIKPLGPGEFDPYIDVYAVKSAPGAPQREVYFMGLIDVLTQYDTKKKAAHAAKTVKHGAGAEISTVHPEQYAKRFREFISNIFA.

One can recognise a PIPK domain in the interval 38–415 (ASDPMLSVFM…RFREFISNIF (378 aa)).

Post-translationally, phosphorylated, phosphorylation is induced by EGF.

The protein localises to the endoplasmic reticulum. It localises to the cytoplasm. It carries out the reaction a 1,2-diacyl-sn-glycero-3-phospho-(1D-myo-inositol-5-phosphate) + ATP = a 1,2-diacyl-sn-glycero-3-phospho-(1D-myo-inositol-4,5-bisphosphate) + ADP + H(+). The catalysed reaction is 1,2-dihexadecanoyl-sn-glycero-3-phospho-(1D-myo-inositol-5-phosphate) + ATP = 1,2-dihexadecanoyl-sn-glycero-3-phospho-(1D-myo-inositol-4,5-bisphosphate) + ADP + H(+). It catalyses the reaction 1,2-dihexadecanoyl-sn-glycero-3-phospho-(1D-myo-inositol-5-phosphate) + GTP = 1,2-dihexadecanoyl-sn-glycero-3-phospho-(1D-myo-inositol-4,5-bisphosphate) + GDP + H(+). Its function is as follows. Phosphatidylinositol 5-phosphate 4-kinase with low enzymatic activity. May be a GTP sensor, has higher GTP-dependent kinase activity than ATP-dependent kinase activity. This Danio rerio (Zebrafish) protein is Phosphatidylinositol 5-phosphate 4-kinase type-2 gamma (pip4k2c).